The following is a 231-amino-acid chain: Peroxisomal membrane protein 11E (231 aa).

Topologically, residues 1–91 are cytoplasmic; it reads MTTLDLTRAE…LPLVLLGKSK (91 aa). Residues 92 to 108 traverse the membrane as a helical segment; the sequence is NALLSTFLFLDQIVWLG. The Lumenal portion of the chain corresponds to 109–202; it reads RSGIYKNKER…LLQLAPKTIS (94 aa). Residues 203 to 222 traverse the membrane as a helical segment; that stretch reads PRVTGAFGFTTSLISCYQLL. The Cytoplasmic segment spans residues 223-231; that stretch reads PSRPKLKTP.

The protein belongs to the peroxin-11 family. In terms of assembly, homooligomer. Interacts with ARC5 and FIS1B on peroxisomes. Expressed in leaves and developing siliques.

Its subcellular location is the peroxisome membrane. Involved in peroxisomal proliferation. Promotes peroxisomal duplication, aggregation or elongation without fission. The polypeptide is Peroxisomal membrane protein 11E (PEX11E) (Arabidopsis thaliana (Mouse-ear cress)).